Consider the following 138-residue polypeptide: uncharacterized protein (138 aa).

This is an uncharacterized protein from Schizosaccharomyces pombe (strain 972 / ATCC 24843) (Fission yeast).